The following is a 199-amino-acid chain: Probable GTP-binding protein EngB (199 aa).

An EngB-type G domain is found at 22–196 (NFSEVAFLGR…EDVIINQTLG (175 aa)). Residues 30-37 (GRSNVGKS), 57-61 (GKTQL), 82-85 (DLPG), 152-155 (TKCD), and 175-177 (VSN) each bind GTP. The Mg(2+) site is built by serine 37 and threonine 59.

The protein belongs to the TRAFAC class TrmE-Era-EngA-EngB-Septin-like GTPase superfamily. EngB GTPase family. The cofactor is Mg(2+).

In terms of biological role, necessary for normal cell division and for the maintenance of normal septation. This is Probable GTP-binding protein EngB from Campylobacter jejuni subsp. doylei (strain ATCC BAA-1458 / RM4099 / 269.97).